A 71-amino-acid chain; its full sequence is ATP synthase F(0) complex subunit e, mitochondrial (71 aa).

Residue K34 is modified to N6-acetyllysine. At S68 the chain carries Phosphoserine.

Belongs to the ATPase e subunit family. Component of the ATP synthase complex composed at least of ATP5F1A/subunit alpha, ATP5F1B/subunit beta, ATP5MC1/subunit c (homooctomer), MT-ATP6/subunit a, MT-ATP8/subunit 8, ATP5ME/subunit e, ATP5MF/subunit f, ATP5MG/subunit g, ATP5MK/subunit k, ATP5MJ/subunit j, ATP5F1C/subunit gamma, ATP5F1D/subunit delta, ATP5F1E/subunit epsilon, ATP5PF/subunit F6, ATP5PB/subunit b, ATP5PD/subunit d, ATP5PO/subunit OSCP. ATP synthase complex consists of a soluble F(1) head domain (subunits alpha(3) and beta(3)) - the catalytic core - and a membrane F(0) domain - the membrane proton channel (subunits c, a, 8, e, f, g, k and j). These two domains are linked by a central stalk (subunits gamma, delta, and epsilon) rotating inside the F1 region and a stationary peripheral stalk (subunits F6, b, d, and OSCP).

It localises to the mitochondrion. The protein resides in the mitochondrion inner membrane. Its function is as follows. Subunit e, of the mitochondrial membrane ATP synthase complex (F(1)F(0) ATP synthase or Complex V) that produces ATP from ADP in the presence of a proton gradient across the membrane which is generated by electron transport complexes of the respiratory chain. ATP synthase complex consist of a soluble F(1) head domain - the catalytic core - and a membrane F(1) domain - the membrane proton channel. These two domains are linked by a central stalk rotating inside the F(1) region and a stationary peripheral stalk. During catalysis, ATP synthesis in the catalytic domain of F(1) is coupled via a rotary mechanism of the central stalk subunits to proton translocation. In vivo, can only synthesize ATP although its ATP hydrolase activity can be activated artificially in vitro. Part of the complex F(0) domain. The polypeptide is ATP synthase F(0) complex subunit e, mitochondrial (Pongo abelii (Sumatran orangutan)).